The chain runs to 2278 residues: Protein Ycf2 (2278 aa).

G1632–S1639 contacts ATP.

Belongs to the Ycf2 family.

It localises to the plastid. It is found in the chloroplast stroma. Functionally, probable ATPase of unknown function. Its presence in a non-photosynthetic plant (Epifagus virginiana) and experiments in tobacco indicate that it has an essential function which is probably not related to photosynthesis. The polypeptide is Protein Ycf2 (Solanum bulbocastanum (Wild potato)).